The sequence spans 631 residues: tRNA uridine 5-carboxymethylaminomethyl modification enzyme MnmG (631 aa).

FAD contacts are provided by residues 13–18 (GGGHAG), valine 125, and serine 180. 273–287 (GPRYCPSIEDKVMRF) serves as a coordination point for NAD(+). Glutamine 370 contributes to the FAD binding site.

The protein belongs to the MnmG family. In terms of assembly, homodimer. Heterotetramer of two MnmE and two MnmG subunits. It depends on FAD as a cofactor.

It localises to the cytoplasm. In terms of biological role, NAD-binding protein involved in the addition of a carboxymethylaminomethyl (cmnm) group at the wobble position (U34) of certain tRNAs, forming tRNA-cmnm(5)s(2)U34. The protein is tRNA uridine 5-carboxymethylaminomethyl modification enzyme MnmG of Vibrio parahaemolyticus serotype O3:K6 (strain RIMD 2210633).